Reading from the N-terminus, the 2382-residue chain is Serine/threonine-protein kinase WNK1 (2382 aa).

2 disordered regions span residues 1 to 81 and 95 to 203; these read MSGG…RFFR and LPGL…QQDD. A phosphoserine mark is found at serine 15 and serine 19. Residues 50 to 66 are compositionally biased toward basic and acidic residues; it reads RTEEYRRRRHTMDKDSR. Threonine 60 carries the phosphothreonine modification. 2 stretches are compositionally biased toward low complexity: residues 95-108 and 125-153; these read LPGLPLSLPQPSIP and VTATATSQVAQQPPAAAAPGEQAVAGPAP. Phosphoserine is present on residues serine 167 and serine 174. A Protein kinase domain is found at 221-479; it reads LKFDIEIGRG…IKDLLNHAFF (259 aa). An ATP-binding site is contributed by serine 231. Chloride is bound by residues phenylalanine 283 and leucine 299. ATP-binding positions include 301 to 304 and lysine 351; that span reads TELM. The active-site Proton acceptor is aspartate 368. Chloride is bound by residues leucine 369 and leucine 371. Residues serine 378 and serine 382 each carry the phosphoserine; by autocatalysis modification. Residues 488–555 are autoinhibitory domain; that stretch reads ELAEEDDGEK…VCEGDHKTMA (68 aa). A compositionally biased stretch (basic and acidic residues) spans 573 to 588; it reads QLVREEQEKKKQEESS. Disordered regions lie at residues 573–779, 1018–1041, and 1053–1119; these read QLVR…QPQA, QPGGSLAQAPTTSSQQAVLESTQG, and VAQT…SRPK. Positions 598–614 are enriched in polar residues; it reads ASQTGIKQLPSASTGIP. Residues 615–625 are compositionally biased toward low complexity; that stretch reads TASTTSASVST. An interaction with KLHL3 region spans residues 628–638; sequence EPEEPEADQHQ. The span at 637–689 shows a compositional bias: polar residues; it reads HQQLQYQQPSISVLSDGTVDSGQGSSVFTESRVSSQQTVSYGSQHEQAHSTGT. Low complexity predominate over residues 709-779; it reads PPSSVAQGQS…TAQPVSQPQA (71 aa). Residues 1025-1041 show a composition bias toward polar residues; the sequence is QAPTTSSQQAVLESTQG. Residues 1053–1077 show a composition bias toward low complexity; that stretch reads VAQTQATQPTTLASSVDSAHSDVAS. The segment covering 1080–1090 has biased composition (polar residues); the sequence is SDGNENVPSSS. A compositionally biased stretch (basic residues) spans 1098-1119; that stretch reads TKRHYRKSVRSRSRHEKTSRPK. Residues 1257 to 1260 carry the RFXV motif 1 motif; that stretch reads RFIV. The residue at position 1261 (serine 1261) is a Phosphoserine. Composition is skewed to low complexity over residues 1457 to 1467 and 1733 to 1745; these read SASAGGSTATP and QVSTPVSTTTSGV. 2 disordered regions span residues 1457–1476 and 1733–1790; these read SASAGGSTATPGPKPPAVVS and QVST…TQSQ. Phosphothreonine is present on threonine 1848. Positions 1859–1862 match the RFXV motif 2 motif; it reads RFQV. The tract at residues 1866-1948 is disordered; the sequence is ADGAQKEGKN…QPTKVGRFQV (83 aa). Residues 1869–1884 show a composition bias toward basic and acidic residues; the sequence is AQKEGKNKSEDAKSVH. Residues 1887–1905 show a composition bias toward low complexity; the sequence is SSTSESSVLSSSSPESTLV. The segment covering 1927–1940 has biased composition (polar residues); sequence KTTASEAKSDTGQP. Short sequence motifs (RFXV motif) lie at residues 1945-1948 and 1957-1960; these read RFQV and RFSV. Residues serine 1978, serine 2002, serine 2011, serine 2012, serine 2027, serine 2029, and serine 2032 each carry the phosphoserine modification. Basic and acidic residues predominate over residues 1994-2003; that stretch reads PKKEKPELSE. Disordered stretches follow at residues 1994-2069 and 2101-2196; these read PKKE…DIED and LYTK…NLYS. Residues 2035–2062 show a composition bias toward low complexity; sequence QLSSKSLPSQNLSQSLSNSFNSSYMSSD. Serine 2121 is modified (phosphoserine). The span at 2122-2134 shows a compositional bias: basic residues; sequence GRRRRPTKSKGSK. The span at 2135–2145 shows a compositional bias: low complexity; the sequence is SSRSSSLGNKS. 2 stretches are compositionally biased toward polar residues: residues 2146–2167 and 2175–2196; these read PQLSGNLSGQSAASVLHPQQTL and ESGQNQLLQPLKPSPSSDNLYS. The segment at 2241-2261 is amphipathic alpha-helix; that stretch reads SRKGTFTDDLHKLVDNWARDA. 2 positions are modified to phosphoserine: serine 2270 and serine 2286. The tract at residues 2332-2352 is disordered; that stretch reads PFGAQWSGTGGPAPQPLGQFQ. 2 positions are modified to phosphoserine: serine 2370 and serine 2372.

This sequence belongs to the protein kinase superfamily. Ser/Thr protein kinase family. WNK subfamily. As to quaternary structure, interacts with WNK3. Interacts with WNK4; inhibiting the activity of WNK4. Interacts with SGK1; promoting its activation. Associates with the mTORC2 complex. Interacts with UVRAG. Interacts (via amphipathic alpha-helix region) with EMC2; promoting the ER membrane protein complex assembly. Interacts with isoform 1; inhibiting isoform 1 activity. Mg(2+) serves as cofactor. In terms of processing, autophosphorylated at Ser-378 and Ser-382, promoting its activity. Autophosphorylation at Ser-382 is inhibited by intracellular calcium. Phosphorylation at Thr-60 increases ability to activate SGK1. Ubiquitinated by the BCR(KLHL3) complex, leading to its degradation. Also ubiquitinated by the BCR(KLHL2) complex. Post-translationally, may be O-glycosylated. In terms of tissue distribution, widely expressed, with highest levels observed in the testis, heart, kidney and skeletal muscle. Strong expression in dorsal root ganglia and spinal cord. As to expression, this isoform is kidney-specific and specifically expressed in the distal convoluted tubule (DCT) and connecting tubule (CNT) of the nephron.

It localises to the cytoplasm. The protein localises to the nucleus. Its subcellular location is the cytoskeleton. It is found in the spindle. The catalysed reaction is L-seryl-[protein] + ATP = O-phospho-L-seryl-[protein] + ADP + H(+). It catalyses the reaction L-threonyl-[protein] + ATP = O-phospho-L-threonyl-[protein] + ADP + H(+). Its activity is regulated as follows. Activated in response to hyperosmotic stress: cell shrinkage promotes formation of a membraneless compartment that concentrates WNK1 with its substrates, OXSR1/OSR1 and STK39/SPAK. Activation requires autophosphorylation of Ser-382 and, to a lower extent, Ser-378. Autophosphorylation and subsequent activation is inhibited by increases in intracellular ionic strength: Cl(-) potently inhibits WNK1 kinase activity via direct binding. Also inhibited by K(+) ions. Inhibited by small compounds staurosporine, tyrphostin 47, as well as Src tyrosine kinase inhibitors PP1 and PP2. Functionally, serine/threonine-protein kinase component of the WNK1-SPAK/OSR1 kinase cascade, which acts as a key regulator of blood pressure and regulatory volume increase by promoting ion influx. WNK1 mediates regulatory volume increase in response to hyperosmotic stress by acting as a molecular crowding sensor, which senses cell shrinkage and mediates formation of a membraneless compartment by undergoing liquid-liquid phase separation. The membraneless compartment concentrates WNK1 with its substrates, OXSR1/OSR1 and STK39/SPAK, promoting WNK1-dependent phosphorylation and activation of downstream kinases OXSR1/OSR1 and STK39/SPAK. Following activation, OXSR1/OSR1 and STK39/SPAK catalyze phosphorylation of ion cotransporters SLC12A1/NKCC2, SLC12A2/NKCC1, SLC12A5/KCC2 and SLC12A6/KCC3, regulating their activity. Phosphorylation of Na-K-Cl cotransporters SLC12A2/NKCC1 and SLC12A2/NKCC1 promote their activation and ion influx; simultaneously, phosphorylation of K-Cl cotransporters SLC12A5/KCC2 and SLC12A6/KCC3 inhibit their activity, blocking ion efflux. Also acts as a regulator of angiogenesis in endothelial cells via activation of OXSR1/OSR1 and STK39/SPAK: activation of OXSR1/OSR1 regulates chemotaxis and invasion, while STK39/SPAK regulates endothelial cell proliferation. Also acts independently of the WNK1-SPAK/OSR1 kinase cascade by catalyzing phosphorylation of other substrates, such as SYT2, PCF11 and NEDD4L. Mediates phosphorylation of SYT2, regulating SYT2 association with phospholipids and membrane-binding. Regulates mRNA export in the nucleus by mediating phosphorylation of PCF11, thereby decreasing the association between PCF11 and POLR2A/RNA polymerase II and promoting mRNA export to the cytoplasm. Acts as a negative regulator of autophagy. Required for the abscission step during mitosis, independently of the WNK1-SPAK/OSR1 kinase cascade. May also play a role in actin cytoskeletal reorganization. Also acts as a scaffold protein independently of its protein kinase activity: negatively regulates cell membrane localization of various transporters and channels, such as SLC4A4, SLC26A6, SLC26A9, TRPV4 and CFTR. Involved in the regulation of epithelial Na(+) channel (ENaC) by promoting activation of SGK1 in a kinase-independent manner: probably acts as a scaffold protein that promotes the recruitment of SGK1 to the mTORC2 complex in response to chloride, leading to mTORC2-dependent phosphorylation and activation of SGK1. Acts as an assembly factor for the ER membrane protein complex independently of its protein kinase activity: associates with EMC2 in the cytoplasm via its amphipathic alpha-helix, and prevents EMC2 ubiquitination and subsequent degradation, thereby promoting EMC2 stabilization. Kinase-defective isoform specifically expressed in kidney, which acts as a dominant-negative regulator of the longer isoform 1. Does not directly inhibit WNK4 and has no direct effect on sodium and chloride ion transport. Down-regulates sodium-chloride cotransporter activity indirectly by inhibiting isoform 1, it associates with isoform 1 and attenuates its kinase activity. In kidney, may play an important role regulating sodium and potassium balance. This Homo sapiens (Human) protein is Serine/threonine-protein kinase WNK1.